The chain runs to 126 residues: Fluoride-specific ion channel FluC (126 aa).

Helical transmembrane passes span 1–21 (MTAT…RFHA), 33–53 (AVFP…MGVL), 72–92 (VGVL…ALLV), and 97–117 (IGLA…GLFL). Residues Gly-76 and Thr-79 each coordinate Na(+).

It belongs to the fluoride channel Fluc/FEX (TC 1.A.43) family.

It is found in the cell inner membrane. The catalysed reaction is fluoride(in) = fluoride(out). With respect to regulation, na(+) is not transported, but it plays an essential structural role and its presence is essential for fluoride channel function. Its function is as follows. Fluoride-specific ion channel. Important for reducing fluoride concentration in the cell, thus reducing its toxicity. The chain is Fluoride-specific ion channel FluC from Novosphingobium aromaticivorans (strain ATCC 700278 / DSM 12444 / CCUG 56034 / CIP 105152 / NBRC 16084 / F199).